The primary structure comprises 96 residues: Transcription and mRNA export factor SUS1 (96 aa).

Lysine 68 is covalently cross-linked (Glycyl lysine isopeptide (Lys-Gly) (interchain with G-Cter in ubiquitin)).

Belongs to the ENY2 family. In terms of assembly, component of the nuclear pore complex (NPC)-associated TREX-2 complex (transcription and export complex 2), composed of at least SUS1, SAC3, THP1, SEM1, and CDC31. TREX-2 contains 2 SUS1 chains. The TREX-2 complex interacts with the nucleoporin NUP1. Component of the 1.8 MDa SAGA transcription coactivator-HAT complex. SAGA is built of 5 distinct domains with specialized functions. Within the SAGA complex, SUS1, SGF11, SGF73 and UBP8 form an additional subcomplex of SAGA called the DUB module (deubiquitination module). Interacts directly with THP1, SAC3, SGF11, and with the RNA polymerase II.

It is found in the nucleus. The protein resides in the nucleoplasm. The protein localises to the cytoplasm. Its subcellular location is the P-body. Its function is as follows. Involved in mRNA export coupled transcription activation by association with both the TREX-2 and the SAGA complexes. At the promoters, SAGA is required for recruitment of the basal transcription machinery. It influences RNA polymerase II transcriptional activity through different activities such as TBP interaction and promoter selectivity, interaction with transcription activators, and chromatin modification through histone acetylation and deubiquitination. Within the SAGA complex, participates in a subcomplex required for deubiquitination of H2B and for the maintenance of steady-state H3 methylation levels. The TREX-2 complex functions in docking export-competent ribonucleoprotein particles (mRNPs) to the nuclear entrance of the nuclear pore complex (nuclear basket). TREX-2 participates in mRNA export and accurate chromatin positioning in the nucleus by tethering genes to the nuclear periphery. May also be involved in cytoplasmic mRNA decay by interaction with components of P-bodies. The protein is Transcription and mRNA export factor SUS1 of Saccharomyces cerevisiae (strain YJM789) (Baker's yeast).